Here is a 341-residue protein sequence, read N- to C-terminus: Biotin synthase (341 aa).

In terms of domain architecture, Radical SAM core spans 53 to 272 (NHVETASLLS…IAVARIMMPK (220 aa)). [4Fe-4S] cluster-binding residues include C68, C72, and C75. [2Fe-2S] cluster-binding residues include C112, C143, C203, and R276.

The protein belongs to the radical SAM superfamily. Biotin synthase family. In terms of assembly, homodimer. The cofactor is [4Fe-4S] cluster. [2Fe-2S] cluster serves as cofactor.

It carries out the reaction (4R,5S)-dethiobiotin + (sulfur carrier)-SH + 2 reduced [2Fe-2S]-[ferredoxin] + 2 S-adenosyl-L-methionine = (sulfur carrier)-H + biotin + 2 5'-deoxyadenosine + 2 L-methionine + 2 oxidized [2Fe-2S]-[ferredoxin]. The protein operates within cofactor biosynthesis; biotin biosynthesis; biotin from 7,8-diaminononanoate: step 2/2. In terms of biological role, catalyzes the conversion of dethiobiotin (DTB) to biotin by the insertion of a sulfur atom into dethiobiotin via a radical-based mechanism. In Nitrobacter winogradskyi (strain ATCC 25391 / DSM 10237 / CIP 104748 / NCIMB 11846 / Nb-255), this protein is Biotin synthase.